The sequence spans 251 residues: Appressoria-specific virulence factor GAS1 (251 aa).

The signal sequence occupies residues 1-21 (MSLKSLIAATILAAPLVAGHG). Residues 40–76 (VTSTPRDGTRRDPFQQDSTRFKGQQADTFGETVGGGQ) form a disordered region. Over residues 54–66 (QQDSTRFKGQQAD) the composition is skewed to polar residues.

It localises to the cytoplasm. In terms of biological role, appressoria-specific virulence factor required for appressorial penetration in host and lesion development. This is Appressoria-specific virulence factor GAS1 from Pyricularia oryzae (strain 70-15 / ATCC MYA-4617 / FGSC 8958) (Rice blast fungus).